The primary structure comprises 282 residues: Biotin synthase (282 aa).

Positions 1–228 (MQEIFLCSIS…NARLMVAGGR (228 aa)) constitute a Radical SAM core domain. The [4Fe-4S] cluster site is built by Cys-17, Cys-21, and Cys-24. [2Fe-2S] cluster-binding residues include Cys-61, Cys-96, Cys-154, and Arg-221.

This sequence belongs to the radical SAM superfamily. Biotin synthase family. In terms of assembly, homodimer. [4Fe-4S] cluster is required as a cofactor. [2Fe-2S] cluster serves as cofactor.

It catalyses the reaction (4R,5S)-dethiobiotin + (sulfur carrier)-SH + 2 reduced [2Fe-2S]-[ferredoxin] + 2 S-adenosyl-L-methionine = (sulfur carrier)-H + biotin + 2 5'-deoxyadenosine + 2 L-methionine + 2 oxidized [2Fe-2S]-[ferredoxin]. It participates in cofactor biosynthesis; biotin biosynthesis; biotin from 7,8-diaminononanoate: step 2/2. In terms of biological role, catalyzes the conversion of dethiobiotin (DTB) to biotin by the insertion of a sulfur atom into dethiobiotin via a radical-based mechanism. This is Biotin synthase from Helicobacter pylori (strain HPAG1).